The sequence spans 232 residues: Phosphoribosylformylglycinamidine synthase subunit PurQ (232 aa).

The region spanning 2–232 (KIAIIQFGGT…SMADYITENF (231 aa)) is the Glutamine amidotransferase type-1 domain. Cys-86 serves as the catalytic Nucleophile. Residues His-203 and Glu-205 contribute to the active site.

As to quaternary structure, part of the FGAM synthase complex composed of 1 PurL, 1 PurQ and 2 PurS subunits.

Its subcellular location is the cytoplasm. It carries out the reaction N(2)-formyl-N(1)-(5-phospho-beta-D-ribosyl)glycinamide + L-glutamine + ATP + H2O = 2-formamido-N(1)-(5-O-phospho-beta-D-ribosyl)acetamidine + L-glutamate + ADP + phosphate + H(+). The enzyme catalyses L-glutamine + H2O = L-glutamate + NH4(+). It participates in purine metabolism; IMP biosynthesis via de novo pathway; 5-amino-1-(5-phospho-D-ribosyl)imidazole from N(2)-formyl-N(1)-(5-phospho-D-ribosyl)glycinamide: step 1/2. In terms of biological role, part of the phosphoribosylformylglycinamidine synthase complex involved in the purines biosynthetic pathway. Catalyzes the ATP-dependent conversion of formylglycinamide ribonucleotide (FGAR) and glutamine to yield formylglycinamidine ribonucleotide (FGAM) and glutamate. The FGAM synthase complex is composed of three subunits. PurQ produces an ammonia molecule by converting glutamine to glutamate. PurL transfers the ammonia molecule to FGAR to form FGAM in an ATP-dependent manner. PurS interacts with PurQ and PurL and is thought to assist in the transfer of the ammonia molecule from PurQ to PurL. The polypeptide is Phosphoribosylformylglycinamidine synthase subunit PurQ (Methanosarcina mazei (strain ATCC BAA-159 / DSM 3647 / Goe1 / Go1 / JCM 11833 / OCM 88) (Methanosarcina frisia)).